Here is a 325-residue protein sequence, read N- to C-terminus: GMP reductase (325 aa).

Cys173 acts as the Thioimidate intermediate in catalysis. Residue 202–225 participates in NADP(+) binding; it reads IIADGGIRSHGDIAKSVRFGATMV.

Belongs to the IMPDH/GMPR family. GuaC type 2 subfamily.

The catalysed reaction is IMP + NH4(+) + NADP(+) = GMP + NADPH + 2 H(+). Catalyzes the irreversible NADPH-dependent deamination of GMP to IMP. It functions in the conversion of nucleobase, nucleoside and nucleotide derivatives of G to A nucleotides, and in maintaining the intracellular balance of A and G nucleotides. The chain is GMP reductase from Acidovorax sp. (strain JS42).